A 481-amino-acid chain; its full sequence is Beta-1,3-glucan-binding protein (481 aa).

An N-terminal signal peptide occupies residues 1-18 (RCARVCAVLFLFIQISYG). One can recognise a CBM39 domain in the interval 20 to 120 (YQVPQVTVQA…LSFTVSALED (101 aa)). The N-linked (GlcNAc...) asparagine glycan is linked to Asn-110. A GH16 domain is found at 124 to 481 (TGTGTDPVPT…LVDYVKVVAL (358 aa)).

Belongs to the insect beta-1,3-glucan binding protein family.

The protein localises to the secreted. Functionally, involved in the recognition of invading microorganisms. Binds specifically to beta-1,3-glucan and activates the phenoloxidase cascade. The polypeptide is Beta-1,3-glucan-binding protein (Hyphantria cunea (Fall webworm moth)).